A 255-amino-acid chain; its full sequence is MKRLNKLVLGIIFLFLVISITAGCGIGKEAKIKKSFEKTLSMYPIKNLEDLYDKEGYRDDEFDKNDKGTWIIGSEMATQNKGEALKVKGMVLYMNRNTKTTKGYYYVNAIKNDKDGRPQENEKRYPVKMVDNKIIPTKEIKDKNIKKEIENFKFFVQYGNFKDLSKYKDGDISYNPEVPSYSAKYQLTNDDYNVKQLRKRYDIPTNKAPKLLLKGTGNLKGSSVGYKDIEFTFVEKKEENIYFSDGLIFKPSEDK.

Residues M1–G23 form the signal peptide. The N-palmitoyl cysteine moiety is linked to residue C24. A lipid anchor (S-diacylglycerol cysteine) is attached at C24.

Belongs to the staphylococcal tandem lipoprotein family.

The protein localises to the cell membrane. This is an uncharacterized protein from Staphylococcus aureus (strain USA300).